A 277-amino-acid chain; its full sequence is MTWIEAIILGLVQGLTEFLPISSSAHIRIVGEFLPSATDPGAAFTAITQLGTELAVLIYFWRDITRIIGRWSAAVTGRIPHSDPDARMGWLIIVGSIPIAVLGLLLEDWIDTEFRSLWITATMLIVFGVLLALADRLGRQTKPLEKLTVRDGVLYGLAQALALIPGVSRSGGTIAAGLAMGYTRPAATRYAFLLAVPAVFASGLYKLYTSLTDPGTQGPYGMGETLVATAVAFVVAYAVIAWLMRFISTNSYLPFVWYRILLGGVLFALLGAGVISA.

7 consecutive transmembrane segments (helical) span residues 1–21, 41–61, 90–110, 114–134, 191–211, 224–244, and 255–275; these read MTWI…FLPI, GAAF…IYFW, WLII…EDWI, FRSL…LALA, AFLL…YTSL, ETLV…AWLM, and FVWY…AGVI.

Belongs to the UppP family.

Its subcellular location is the cell membrane. It catalyses the reaction di-trans,octa-cis-undecaprenyl diphosphate + H2O = di-trans,octa-cis-undecaprenyl phosphate + phosphate + H(+). Functionally, catalyzes the dephosphorylation of undecaprenyl diphosphate (UPP). Confers resistance to bacitracin. This Micrococcus luteus (strain ATCC 4698 / DSM 20030 / JCM 1464 / CCM 169 / CCUG 5858 / IAM 1056 / NBRC 3333 / NCIMB 9278 / NCTC 2665 / VKM Ac-2230) (Micrococcus lysodeikticus) protein is Undecaprenyl-diphosphatase.